Consider the following 180-residue polypeptide: HTH-type transcriptional regulator EcpR (180 aa).

One can recognise an HTH luxR-type domain in the interval 122–180 (KDIKKDKITDREMKIIRMTAQGMQPKSIARIENCSVKTVYTHRRNAEAKLYSKIYKLVQ). Residues 146–165 (PKSIARIENCSVKTVYTHRR) constitute a DNA-binding region (H-T-H motif).

This sequence belongs to the EcpR/MatA family.

The protein resides in the cytoplasm. In terms of biological role, part of the ecpRABCDE operon, which encodes the E.coli common pilus (ECP). ECP plays a dual role in early-stage biofilm development and host cell recognition. Positively regulates the expression of the ecp operon. In Klebsiella pneumoniae subsp. pneumoniae (strain ATCC 700721 / MGH 78578), this protein is HTH-type transcriptional regulator EcpR (ecpR).